The primary structure comprises 256 residues: 5'-nucleotidase SurE (256 aa).

A divalent metal cation-binding residues include D8, D9, S40, and N94.

It belongs to the SurE nucleotidase family. It depends on a divalent metal cation as a cofactor.

The protein localises to the cytoplasm. It carries out the reaction a ribonucleoside 5'-phosphate + H2O = a ribonucleoside + phosphate. In terms of biological role, nucleotidase that shows phosphatase activity on nucleoside 5'-monophosphates. The chain is 5'-nucleotidase SurE from Wolbachia pipientis subsp. Culex pipiens (strain wPip).